Reading from the N-terminus, the 1380-residue chain is MAQTLSFNGRRRVRKFFGKIPEVAEMPNLIEVQKASYDQFLMVEEPAGGRPDEGLQAVFKSVFPIKDFSGASMLEFVSYEFEPPKFDVEECRQRDLTYAAPLKVTLRLIVFDIDEDTGAKSIKDIKEQNVYMGDMPLMTDNGTFIVNGTERVIVSQMHRSPGVFFDHDKGKSHSSGKLLFAARVIPYRGSWLDIEFDAKDIVHARIDRRRKIPVTSLLMALGMDGEEILSTFYTQSLYQRDGDGWRVPFQPDALKGQKAIAEMIDADTGEVVVEAGKKLTPRLLRQLQEKGLKALKSTDDELYGNYLAEDVVNYETGEIYLEAGDEIDEKTLPVILSAGFDEIPVLDIDHINVGAYIRNTLAADKNENRQDALFDIYRVMRPGEPPTMDSAEAMFNALFFDAERYDLSAVGRVKMNMRLDLDVPDTVRTLRKEDILAVVKMLVELRDGKGEIDDIDNLGNRRVRSVGELMENQYRLGLLRMERAIKERMSSIEIDTVMPQDLINAKPAAAAVREFFGSSQLSRFMDQVNPLSEITHKRRLSALGPGGLTRERAGFEVRDVHPTHYGRICPIETPEGPNIGLINSLATFARVNKYGFIESPYRKIVDGNVTSDVVYLSAMEDAKYHVAQANSVLNDDGSFAEEFVVCRHAGEVMLAPRDNINLMDVSPKQLVSVAAALIPFLENDDANRALMGSNMQRQAVPLLRAEAPFVGTGMESVVARDSGAAIAARRGGVVDQVDATRIVIRATEDLDPSKSGVDIYRLQKFQRSNQNTCVNQRPLVTVGDLVNKGDIIADGPSTDLGDLALGRNALVAFMPWNGYNYEDSILLSERIVRDDVFTSIHIEEFEVMARDTKLGPEEITRDIPNVSEEALKNLDEAGIVYIGAEVQPGDILVGKITPKGESPMTPEEKLLRAIFGEKASDVRDTSMRMPPGTFGTIVEVRVFNRHGVEKDERAMAIEREEIERLAKDRDDEQAILDRNVYARLIDMLRGHVAVAGPKGFKKGTELSNAVISEYPRSQWWMFAVEDEKAQGEIEALRAQYDESKSRLEQRFMDKVEKVQRGDEMPPGVMKMVKVFVAVKRKIQPGDKMAGRHGNKGVVSRIVPIEDMPFLEDGTHVDVVLNPLGVPSRMNVGQILETHLGWACAGMGKKIGAMLDAYHESGDIKPLRTTIDDVIGSGPKGEPIKQYDDESIVRLAEQTRRGVSIATPVFDGAVEADVNEMLEKAGLKVTGQSTLYDGRTGDAFDRQVTVGYIYMLKLNHLVDDKIHARSIGPYSLVTQQPLGGKAQFGGQRFGEMEVWALEAYGAAYTLQEMLTVKSDDVAGRTKVYEAIVRGDDTFEAGIPESFNVLVKEMRSLGLSVELENSKVDDLGTTAQLPDAAE.

It belongs to the RNA polymerase beta chain family. The RNAP catalytic core consists of 2 alpha, 1 beta, 1 beta' and 1 omega subunit. When a sigma factor is associated with the core the holoenzyme is formed, which can initiate transcription.

The catalysed reaction is RNA(n) + a ribonucleoside 5'-triphosphate = RNA(n+1) + diphosphate. In terms of biological role, DNA-dependent RNA polymerase catalyzes the transcription of DNA into RNA using the four ribonucleoside triphosphates as substrates. This is DNA-directed RNA polymerase subunit beta from Sinorhizobium fredii (strain NBRC 101917 / NGR234).